The chain runs to 206 residues: uncharacterized protein (206 aa).

Residues 166–186 traverse the membrane as a helical segment; that stretch reads FYTGLSVIVGGATALALGLFF.

The protein resides in the membrane. This is an uncharacterized protein from Dictyostelium discoideum (Social amoeba).